Reading from the N-terminus, the 94-residue chain is Large ribosomal subunit protein uL23 (94 aa).

Belongs to the universal ribosomal protein uL23 family. In terms of assembly, part of the 50S ribosomal subunit. Contacts protein L29, and trigger factor when it is bound to the ribosome.

One of the early assembly proteins it binds 23S rRNA. One of the proteins that surrounds the polypeptide exit tunnel on the outside of the ribosome. Forms the main docking site for trigger factor binding to the ribosome. The chain is Large ribosomal subunit protein uL23 from Roseiflexus sp. (strain RS-1).